The primary structure comprises 1380 residues: DNA-directed RNA polymerase subunit beta (1380 aa).

Belongs to the RNA polymerase beta chain family. As to quaternary structure, the RNAP catalytic core consists of 2 alpha, 1 beta, 1 beta' and 1 omega subunit. When a sigma factor is associated with the core the holoenzyme is formed, which can initiate transcription.

The enzyme catalyses RNA(n) + a ribonucleoside 5'-triphosphate = RNA(n+1) + diphosphate. Functionally, DNA-dependent RNA polymerase catalyzes the transcription of DNA into RNA using the four ribonucleoside triphosphates as substrates. This Nitrobacter winogradskyi (strain ATCC 25391 / DSM 10237 / CIP 104748 / NCIMB 11846 / Nb-255) protein is DNA-directed RNA polymerase subunit beta.